We begin with the raw amino-acid sequence, 1146 residues long: Transcription-repair-coupling factor (1146 aa).

In terms of domain architecture, Helicase ATP-binding spans 617 to 778 (DMCQPKAMDR…MNGIRDLSII (162 aa)). 630–637 (GDVGFGKT) is an ATP binding site. Positions 731–734 (DEEH) match the DEEH box motif. One can recognise a Helicase C-terminal domain in the interval 800 to 953 (VREAILREIL…GFILATHDLE (154 aa)).

The protein in the N-terminal section; belongs to the UvrB family. In the C-terminal section; belongs to the helicase family. RecG subfamily.

The protein resides in the cytoplasm. Its function is as follows. Couples transcription and DNA repair by recognizing RNA polymerase (RNAP) stalled at DNA lesions. Mediates ATP-dependent release of RNAP and its truncated transcript from the DNA, and recruitment of nucleotide excision repair machinery to the damaged site. This chain is Transcription-repair-coupling factor, found in Haemophilus influenzae (strain ATCC 51907 / DSM 11121 / KW20 / Rd).